A 256-amino-acid polypeptide reads, in one-letter code: Imidazole glycerol phosphate synthase subunit HisF (256 aa).

Residues Asp-12 and Asp-131 contribute to the active site.

This sequence belongs to the HisA/HisF family. Heterodimer of HisH and HisF.

Its subcellular location is the cytoplasm. It catalyses the reaction 5-[(5-phospho-1-deoxy-D-ribulos-1-ylimino)methylamino]-1-(5-phospho-beta-D-ribosyl)imidazole-4-carboxamide + L-glutamine = D-erythro-1-(imidazol-4-yl)glycerol 3-phosphate + 5-amino-1-(5-phospho-beta-D-ribosyl)imidazole-4-carboxamide + L-glutamate + H(+). It participates in amino-acid biosynthesis; L-histidine biosynthesis; L-histidine from 5-phospho-alpha-D-ribose 1-diphosphate: step 5/9. IGPS catalyzes the conversion of PRFAR and glutamine to IGP, AICAR and glutamate. The HisF subunit catalyzes the cyclization activity that produces IGP and AICAR from PRFAR using the ammonia provided by the HisH subunit. The chain is Imidazole glycerol phosphate synthase subunit HisF from Pseudomonas syringae pv. tomato (strain ATCC BAA-871 / DC3000).